Here is a 649-residue protein sequence, read N- to C-terminus: Solute carrier family 22 member 17 (649 aa).

Positions 1–70 are disordered; that stretch reads MAPRVATGTP…GGDGLGSSLS (70 aa). Residues 24–34 are compositionally biased toward polar residues; it reads VEITPTSNGQV. A compositionally biased stretch (basic and acidic residues) spans 47-57; that stretch reads QGEREREREGE. N-linked (GlcNAc...) asparagine glycosylation is found at N134 and N143. A run of 11 helical transmembrane segments spans residues 211-231, 240-260, 265-285, 300-320, 330-350, 414-433, 448-468, 477-497, 526-546, 557-577, and 584-604; these read VILE…FLGY, GIVL…AAAG, VMAL…GVYL, ALAG…LALV, MITA…FLES, NIWK…HAIR, FYLC…FLGV, GILL…LGLW, FSVL…LLAA, GLGL…AQRL, and FLQH…IMLL.

It belongs to the major facilitator (TC 2.A.1) superfamily. Organic cation transporter (TC 2.A.1.19) family. In terms of tissue distribution, expressed in brain.

It is found in the cell membrane. The protein localises to the vacuole membrane. Cell surface receptor for LCN2 (24p3) that plays a key role in iron homeostasis and transport. Able to bind iron-bound LCN2 (holo-24p3), followed by internalization of holo-24p3 and release of iron, thereby increasing intracellular iron concentration and leading to inhibition of apoptosis. Also binds iron-free LCN2 (apo-24p3), followed by internalization of apo-24p3 and its association with an intracellular siderophore, leading to iron chelation and iron transfer to the extracellular medium, thereby reducing intracellular iron concentration and resulting in apoptosis. The protein is Solute carrier family 22 member 17 (SLC22A17) of Homo sapiens (Human).